The following is a 533-amino-acid chain: Probable fucosyltransferase 5 (533 aa).

The Cytoplasmic segment spans residues 1–13 (MYQKFQISGKIVK). The chain crosses the membrane as a helical; Signal-anchor for type II membrane protein span at residues 14–34 (TLGLKMKVLIAVSFGSLLFIL). Over 35 to 533 (SYSNNFNNKL…YGGLKLYDEF (499 aa)) the chain is Lumenal. N-linked (GlcNAc...) asparagine glycosylation is found at N202, N227, N374, N396, and N475.

The protein belongs to the glycosyltransferase 37 family. As to expression, expressed in roots, leaves, flowers and siliques.

Its subcellular location is the golgi apparatus. It is found in the golgi stack membrane. It functions in the pathway protein modification; protein glycosylation. Functionally, may be involved in cell wall biosynthesis. May act as a fucosyltransferase. This chain is Probable fucosyltransferase 5 (FUT5), found in Arabidopsis thaliana (Mouse-ear cress).